The following is a 428-amino-acid chain: Gamma-glutamyl phosphate reductase (428 aa).

It belongs to the gamma-glutamyl phosphate reductase family.

It localises to the cytoplasm. It carries out the reaction L-glutamate 5-semialdehyde + phosphate + NADP(+) = L-glutamyl 5-phosphate + NADPH + H(+). The protein operates within amino-acid biosynthesis; L-proline biosynthesis; L-glutamate 5-semialdehyde from L-glutamate: step 2/2. Functionally, catalyzes the NADPH-dependent reduction of L-glutamate 5-phosphate into L-glutamate 5-semialdehyde and phosphate. The product spontaneously undergoes cyclization to form 1-pyrroline-5-carboxylate. In Mesorhizobium japonicum (strain LMG 29417 / CECT 9101 / MAFF 303099) (Mesorhizobium loti (strain MAFF 303099)), this protein is Gamma-glutamyl phosphate reductase.